The sequence spans 384 residues: L-cysteine:1D-myo-inositol 2-amino-2-deoxy-alpha-D-glucopyranoside ligase (384 aa).

A Zn(2+)-binding site is contributed by Cys-16. Residues 16–19 (CGIT), Thr-31, and 54–56 (NVT) each bind L-cysteinyl-5'-AMP. The short motif at 18–28 (ITPYDATHLGH) is the 'HIGH' region element. The 'ERGGDP' region motif lies at 159–164 (QSGGDP). Trp-199 provides a ligand contact to L-cysteinyl-5'-AMP. Cys-203 is a binding site for Zn(2+). An L-cysteinyl-5'-AMP-binding site is contributed by 221–223 (GSD). His-228 contributes to the Zn(2+) binding site. Residue Ile-255 participates in L-cysteinyl-5'-AMP binding. The short motif at 261–265 (KMSKS) is the 'KMSKS' region element.

Belongs to the class-I aminoacyl-tRNA synthetase family. MshC subfamily. Monomer. Zn(2+) serves as cofactor.

The enzyme catalyses 1D-myo-inositol 2-amino-2-deoxy-alpha-D-glucopyranoside + L-cysteine + ATP = 1D-myo-inositol 2-(L-cysteinylamino)-2-deoxy-alpha-D-glucopyranoside + AMP + diphosphate + H(+). Functionally, catalyzes the ATP-dependent condensation of GlcN-Ins and L-cysteine to form L-Cys-GlcN-Ins. This chain is L-cysteine:1D-myo-inositol 2-amino-2-deoxy-alpha-D-glucopyranoside ligase, found in Mycobacterium leprae (strain Br4923).